A 278-amino-acid polypeptide reads, in one-letter code: Anamorsin homolog (278 aa).

The N-terminal SAM-like domain stretch occupies residues 1-147 (MESVSHLVSN…EIGSSAALPF (147 aa)). The segment at 147–191 (FANKISLGGNSKMETAKMWTLSSQDFVDDDIDIIDENTLIEEDDF) is linker. The [2Fe-2S] cluster site is built by Cys204, Cys214, Cys217, and Cys219. Residues 204–219 (CDSAKKKRKACKNCSC) are fe-S binding site A. [4Fe-4S] cluster-binding residues include Cys239, Cys242, Cys250, and Cys253. 2 consecutive short sequence motifs (cx2C motif) follow at residues 239-242 (CGSC) and 250-253 (CSSC). Residues 239–253 (CGSCYLGDAFRCSSC) form a fe-S binding site B region.

Belongs to the anamorsin family. In terms of assembly, monomer. [2Fe-2S] cluster serves as cofactor. Requires [4Fe-4S] cluster as cofactor.

It localises to the cytoplasm. The protein resides in the mitochondrion intermembrane space. Component of the cytosolic iron-sulfur (Fe-S) protein assembly (CIA) machinery. Required for the maturation of extramitochondrial Fe-S proteins. Part of an electron transfer chain functioning in an early step of cytosolic Fe-S biogenesis, facilitating the de novo assembly of a [4Fe-4S] cluster on the cytosolic Fe-S scaffold complex. Electrons are transferred from NADPH via a FAD- and FMN-containing diflavin oxidoreductase. Together with the diflavin oxidoreductase, also required for the assembly of the diferric tyrosyl radical cofactor of ribonucleotide reductase (RNR), probably by providing electrons for reduction during radical cofactor maturation in the catalytic small subunit. The sequence is that of Anamorsin homolog from Trichoplax adhaerens (Trichoplax reptans).